Reading from the N-terminus, the 883-residue chain is Chromatin structure-remodeling complex protein RSC30 (883 aa).

A DNA-binding region (zn(2)-C6 fungal-type) is located at residues 14 to 45 (ACTQCRKRKIGCDRAKPICGNCVKYNKPDCFY). Disordered stretches follow at residues 121-157 (QNNN…DVPS) and 241-273 (NTTA…TSRT). The span at 130–149 (APRQNSSTVSSNVHGNTIVR) shows a compositional bias: polar residues. Ser-150 is modified (phosphoserine). Polar residues predominate over residues 241–251 (NTTANKINKTG). A compositionally biased stretch (basic and acidic residues) spans 252-270 (ENSKKGKVDGKRAGFDHQT).

In terms of assembly, forms a heteromer with RSC3. Interacts with NPL6. Component of the two forms of the RSC complex composed of at least either RSC1 or RSC2, and ARP7, ARP9, LDB7, NPL6, RSC3, RSC30, RSC4, RSC58, RSC6, RSC8, RSC9, SFH1, STH1, HTL1 and probably RTT102. The complexes interact with histone and histone variant components of centromeric chromatin. Component of a fungal-specific module (HTL1-LDB7-NPL6-RSC3-RSC30) within the RSC complex.

It is found in the nucleus. In terms of biological role, component of the chromatin structure-remodeling complex (RSC), which is involved in transcription regulation and nucleosome positioning. RSC is responsible for the transfer of a histone octamer from a nucleosome core particle to naked DNA. The reaction requires ATP and involves an activated RSC-nucleosome intermediate. Remodeling reaction also involves DNA translocation, DNA twist and conformational change. As a reconfigurer of centromeric and flanking nucleosomes, RSC complex is required both for proper kinetochore function in chromosome segregation and, via a PKC1-dependent signaling pathway, for organization of the cellular cytoskeleton. This subunit is required for transcription of ribosomal protein genes and genes involved in the integrity of the cell wall. Together with HTL1, LDB7, NPL6, RSC3 components, defines a fungal-specific module within the RSC complex that plays a role in many cellular functions including the maintenance of cell wall integrity. The polypeptide is Chromatin structure-remodeling complex protein RSC30 (RSC30) (Saccharomyces cerevisiae (strain ATCC 204508 / S288c) (Baker's yeast)).